The following is a 1547-amino-acid chain: Fatty acid synthase subunit alpha (1547 aa).

The segment at Thr94–Ala121 is disordered. Over residues Glu109–His118 the composition is skewed to polar residues. A Carrier domain is found at Leu145–Arg221. Ser180 bears the O-(pantetheine 4'-phosphoryl)serine mark. Positions Gly563–Thr798 are ketoreductase (KR) domain. The region spanning Lys1004–His1476 is the Ketosynthase family 3 (KS3) domain. Residues Cys1190 and His1442 each act as for beta-ketoacyl synthase activity in the active site.

The protein belongs to the thiolase-like superfamily. Fungal fatty acid synthetase subunit alpha family. It depends on pantetheine 4'-phosphate as a cofactor.

The enzyme catalyses acetyl-CoA + n malonyl-CoA + 2n NADPH + 4n H(+) = a long-chain-acyl-CoA + n CoA + n CO2 + 2n NADP(+).. The catalysed reaction is a fatty acyl-[ACP] + malonyl-[ACP] + H(+) = a 3-oxoacyl-[ACP] + holo-[ACP] + CO2. It catalyses the reaction a (3R)-hydroxyacyl-[ACP] + NADP(+) = a 3-oxoacyl-[ACP] + NADPH + H(+). It functions in the pathway mycotoxin biosynthesis; HC-toxin biosynthesis. Fatty acid synthase alpha subunit, part of the diffuse TOX2 gene cluster that mediates the biosynthesis of the HC-toxin, cyclic tetrapeptide of structure cyclo(D-Pro-L-Ala-D-Ala-L-Aeo), where Aeo stands for 2-amino-9,10-epoxi-8-oxodecanoic acid. HC-toxin is a determinant of specificity and virulence in the interaction between the producing fungus and its host, maize. TOXH contribute to the synthesis of the decanoic backbone of 2-amino-9,10-epoxi-8-oxodecanoic acid, an essential precursor for the production of the major forms of HC-toxin by the non-ribosomal peptide synthetase HTS1. The protein is Fatty acid synthase subunit alpha of Cochliobolus carbonum (Maize leaf spot fungus).